The primary structure comprises 124 residues: MPKSEFFREERKRRVALLGEDAVCKLNGVCGYSCGMPPAVEKVSVPADTEEDVYMLIFPYEQFCGEKHFKLYESLKDVSDDELKLRRLERQRETLLASFQQKLKRYDEKIALLSEKFKNLRSKL.

The segment at Met1–Arg14 is basic motif (BM). A C-2 region spans residues Cys30–His68. Residues Tyr72–Leu124 adopt a coiled-coil conformation. Residue Ser79 is modified to Phosphoserine.

Belongs to the virgaviridae suppressor of RNA silencing family. As to quaternary structure, homooligomer. In terms of processing, phosphorylated at Ser-79 by a host PKA-like kinase; the phosphorylation at this site seems to suppress host cell death.

It localises to the host chloroplast envelope. Its subcellular location is the host endoplasmic reticulum. The protein resides in the host cell junction. It is found in the host plasmodesma. Functionally, suppressor of RNA-mediated gene silencing, also known as post-transcriptional gene silencing (PTGS), a mechanism of plant viral defense that limits the accumulation of viral RNAs. Promotes viral cell-to-cell long distance movement. This chain is Suppressor of RNA silencing, found in Peanut clump virus (isolate 87/TGTA2) (PCV).